Here is a 180-residue protein sequence, read N- to C-terminus: UPF0227 protein PC1_2487 (180 aa).

It belongs to the UPF0227 family.

The chain is UPF0227 protein PC1_2487 from Pectobacterium carotovorum subsp. carotovorum (strain PC1).